A 264-amino-acid polypeptide reads, in one-letter code: S-adenosylmethionine decarboxylase proenzyme (264 aa).

Ser-112 serves as the catalytic Schiff-base intermediate with substrate; via pyruvic acid. At Ser-112 the chain carries Pyruvic acid (Ser); by autocatalysis. The active-site Proton acceptor; for processing activity is the His-117. The active-site Proton donor; for catalytic activity is the Cys-140.

Belongs to the prokaryotic AdoMetDC family. Type 2 subfamily. Heterooctamer of four alpha and four beta chains arranged as a tetramer of alpha/beta heterodimers. Requires pyruvate as cofactor. In terms of processing, is synthesized initially as an inactive proenzyme. Formation of the active enzyme involves a self-maturation process in which the active site pyruvoyl group is generated from an internal serine residue via an autocatalytic post-translational modification. Two non-identical subunits are generated from the proenzyme in this reaction, and the pyruvate is formed at the N-terminus of the alpha chain, which is derived from the carboxyl end of the proenzyme. The post-translation cleavage follows an unusual pathway, termed non-hydrolytic serinolysis, in which the side chain hydroxyl group of the serine supplies its oxygen atom to form the C-terminus of the beta chain, while the remainder of the serine residue undergoes an oxidative deamination to produce ammonia and the pyruvoyl group blocking the N-terminus of the alpha chain.

It catalyses the reaction S-adenosyl-L-methionine + H(+) = S-adenosyl 3-(methylsulfanyl)propylamine + CO2. It participates in amine and polyamine biosynthesis; S-adenosylmethioninamine biosynthesis; S-adenosylmethioninamine from S-adenosyl-L-methionine: step 1/1. In terms of biological role, catalyzes the decarboxylation of S-adenosylmethionine to S-adenosylmethioninamine (dcAdoMet), the propylamine donor required for the synthesis of the polyamines spermine and spermidine from the diamine putrescine. This chain is S-adenosylmethionine decarboxylase proenzyme, found in Photorhabdus laumondii subsp. laumondii (strain DSM 15139 / CIP 105565 / TT01) (Photorhabdus luminescens subsp. laumondii).